The chain runs to 202 residues: PXMP2/4 family protein 1 (202 aa).

4 helical membrane-spanning segments follow: residues 21-41 (PVIT…TLAQ), 54-72 (LMMC…HFWF), 138-154 (KAWM…FRFV), and 161-177 (LISN…LSTV).

It belongs to the peroxisomal membrane protein PXMP2/4 family.

The protein resides in the membrane. The sequence is that of PXMP2/4 family protein 1 from Dictyostelium discoideum (Social amoeba).